The following is a 211-amino-acid chain: Protein-L-isoaspartate O-methyltransferase (211 aa).

Ser62 is a catalytic residue.

It belongs to the methyltransferase superfamily. L-isoaspartyl/D-aspartyl protein methyltransferase family.

It localises to the cytoplasm. It catalyses the reaction [protein]-L-isoaspartate + S-adenosyl-L-methionine = [protein]-L-isoaspartate alpha-methyl ester + S-adenosyl-L-homocysteine. In terms of biological role, catalyzes the methyl esterification of L-isoaspartyl residues in peptides and proteins that result from spontaneous decomposition of normal L-aspartyl and L-asparaginyl residues. It plays a role in the repair and/or degradation of damaged proteins. In Shewanella loihica (strain ATCC BAA-1088 / PV-4), this protein is Protein-L-isoaspartate O-methyltransferase.